Here is a 401-residue protein sequence, read N- to C-terminus: Tyrosine--tRNA ligase (401 aa).

A 'HIGH' region motif is present at residues 41-50; sequence PSRPDLHLGH. The 'KMSKS' region motif lies at 225-229; the sequence is KMSKS. An ATP-binding site is contributed by K228. The S4 RNA-binding domain occupies 334 to 395; it reads KNIVDLLVEI…GKRKFYRISG (62 aa).

It belongs to the class-I aminoacyl-tRNA synthetase family. TyrS type 2 subfamily. As to quaternary structure, homodimer.

Its subcellular location is the cytoplasm. The catalysed reaction is tRNA(Tyr) + L-tyrosine + ATP = L-tyrosyl-tRNA(Tyr) + AMP + diphosphate + H(+). Its function is as follows. Catalyzes the attachment of tyrosine to tRNA(Tyr) in a two-step reaction: tyrosine is first activated by ATP to form Tyr-AMP and then transferred to the acceptor end of tRNA(Tyr). This chain is Tyrosine--tRNA ligase, found in Thermotoga maritima (strain ATCC 43589 / DSM 3109 / JCM 10099 / NBRC 100826 / MSB8).